A 136-amino-acid chain; its full sequence is Small ribosomal subunit protein eS6 (136 aa).

This sequence belongs to the eukaryotic ribosomal protein eS6 family.

The protein is Small ribosomal subunit protein eS6 of Methanosarcina acetivorans (strain ATCC 35395 / DSM 2834 / JCM 12185 / C2A).